The chain runs to 138 residues: Large ribosomal subunit protein uL16 (138 aa).

Positions M1–G19 are enriched in basic residues. Residues M1–G24 are disordered.

Belongs to the universal ribosomal protein uL16 family. As to quaternary structure, part of the 50S ribosomal subunit.

In terms of biological role, binds 23S rRNA and is also seen to make contacts with the A and possibly P site tRNAs. This Corynebacterium jeikeium (strain K411) protein is Large ribosomal subunit protein uL16.